Reading from the N-terminus, the 180-residue chain is Cytokinin-beta-glucosidase 2 (180 aa).

In terms of biological role, hydrolyzes cytokinin glucosides thus liberating free cytokinins. The protein is Cytokinin-beta-glucosidase 2 (ROLC2) of Linaria vulgaris (Toadflax).